A 52-amino-acid chain; its full sequence is uncharacterized protein (52 aa).

The tract at residues 1–52 (MFGFIYRDPSPAPQGKIRDGSKDPKTPGGGGGGGGGISPNGGAPLGGKGFSM) is disordered. A compositionally biased stretch (basic and acidic residues) spans 16–25 (KIRDGSKDPK). The span at 27–52 (PGGGGGGGGGISPNGGAPLGGKGFSM) shows a compositional bias: gly residues.

This is an uncharacterized protein from Dictyostelium discoideum (Social amoeba).